The primary structure comprises 1502 residues: Leucine-rich repeat-containing protein 9 (1502 aa).

29 LRR repeats span residues 53–79 (FPNLTQLILVGQNIHCIAGLESCHFLK), 97–119 (CADLQKLYLYHNEISVIEGLENL), 120–141 (LKLEVLWLNNNQINVIEGLDMM), 142–164 (QNLKELNLANNLIHSIGESLDPN), 166–188 (QLERLNLSGNKISSFKELTNLAR), 224–247 (LQRLDTYDVSEKQIKNLAESTVVK), 296–320 (EHELTDMKSSGNMQANIPISNKFHE), 699–721 (YSQITVLNLHGNSLSKLKDISRL), 722–744 (NGLRKLIISFNEFSSLEDVSYLT), 746–764 (LEYLDASHNQVITLEGFKG), 765–790 (LGKLKYLDLSWNKLTNSREDLHILRK), 792–814 (AIQLSSLDIRYNFWQKPASVLKD), 822–849 (LTHLNGVTITEDEISEALQISSGSRITQ), 894–916 (YTKITSLTLDSQNLVRITNLEKL), 917–938 (VNLRWASFSSNHLTKIEGLEHC), 939–960 (VNLEELNLDDNSISKLEGLSKL), 961–983 (TKLRRLSINNNLLAGFDRHVIES), 985–1009 (SHLHFLSAENNNISSLAGLQRGYKL), 1011–1030 (ELYLSNNCISSNQEIYSLKG), 1031–1053 (LNNLVILDMWGNPILLKHENYRL), 1100–1123 (FTELQDLNWRTSSIRSIDLVPADH), 1124–1146 (FRNVQTVNLENNNLTSFSGLIFL), 1147–1170 (PNIKNLYLNHNRIESILPQQKSQS), 1209–1232 (MQSLEVLHLGYNGINSLPMLQLGR), 1234–1255 (RNLKSLYLQGNEISHVEGLENL), 1256–1278 (QFLRELVLDHNRIKAIAETSFAK), 1280–1301 (NSLVSLNLEENRLRDLNNLPPL), 1302–1325 (LKLRKLLIGSNKIQEISEIEKLEV), and 1327–1351 (PALVELSISGNPISRKPFLRNLLVV). Residues 317-342 (KFHENNCDTEESNSQQSSERRKNNSD) are disordered. Residues 1479–1496 (TQQSGQARSQQKHPFNQE) are compositionally biased toward polar residues. Positions 1479–1502 (TQQSGQARSQQKHPFNQENEGRCV) are disordered.

The chain is Leucine-rich repeat-containing protein 9 (lrrc9) from Xenopus tropicalis (Western clawed frog).